A 215-amino-acid chain; its full sequence is Pyrrolidone-carboxylate peptidase (215 aa).

Catalysis depends on residues Glu-80, Cys-143, and His-167.

Belongs to the peptidase C15 family. Homotetramer.

It localises to the cytoplasm. It catalyses the reaction Release of an N-terminal pyroglutamyl group from a polypeptide, the second amino acid generally not being Pro.. In terms of biological role, removes 5-oxoproline from various penultimate amino acid residues except L-proline. This chain is Pyrrolidone-carboxylate peptidase, found in Bacillus thuringiensis subsp. konkukian (strain 97-27).